The chain runs to 428 residues: Sulfhydrogenase 1 subunit alpha (428 aa).

Residues C65, C68, C418, and C421 each coordinate Ni(2+). Fe cation is bound at residue C68. C421 contacts Fe cation.

This sequence belongs to the [NiFe]/[NiFeSe] hydrogenase large subunit family. As to quaternary structure, heterotetramer of alpha, beta, gamma and delta subunits. The nickel-containing alpha and delta subunits constitute the hydrogenase activity. The beta and gamma subunits (flavin-containing dimer) constitute the sulfur reductase activity. The cofactor is Ni(2+). It depends on Fe cation as a cofactor.

It localises to the cytoplasm. It catalyses the reaction H2 + NADP(+) = NADPH + H(+). Part of a bifunctional enzyme complex that functions as an NADPH-dependent hydrogen-evolving hydrogenase with sulfur-reducing activity. May play a role in hydrogen cycling during fermentative growth. Activity not exhibited with NAD. The alpha and delta subunits form the hydrogenase component that catalyzes the reduction of protons to evolve hydrogen. The protein is Sulfhydrogenase 1 subunit alpha of Pyrococcus furiosus (strain ATCC 43587 / DSM 3638 / JCM 8422 / Vc1).